Reading from the N-terminus, the 529-residue chain is uncharacterized protein (529 aa).

Positions 157–410 (DFPHIICEIE…FKNRVRENID (254 aa)) constitute a Radical SAM core domain. C171, C176, and C179 together coordinate [4Fe-4S] cluster.

Requires [4Fe-4S] cluster as cofactor.

This is an uncharacterized protein from Archaeoglobus fulgidus (strain ATCC 49558 / DSM 4304 / JCM 9628 / NBRC 100126 / VC-16).